A 305-amino-acid chain; its full sequence is UDP-3-O-acyl-N-acetylglucosamine deacetylase (305 aa).

The Zn(2+) site is built by His-78, His-237, and Asp-241. The active-site Proton donor is His-264.

It belongs to the LpxC family. Zn(2+) serves as cofactor.

The catalysed reaction is a UDP-3-O-[(3R)-3-hydroxyacyl]-N-acetyl-alpha-D-glucosamine + H2O = a UDP-3-O-[(3R)-3-hydroxyacyl]-alpha-D-glucosamine + acetate. It participates in glycolipid biosynthesis; lipid IV(A) biosynthesis; lipid IV(A) from (3R)-3-hydroxytetradecanoyl-[acyl-carrier-protein] and UDP-N-acetyl-alpha-D-glucosamine: step 2/6. Its function is as follows. Catalyzes the hydrolysis of UDP-3-O-myristoyl-N-acetylglucosamine to form UDP-3-O-myristoylglucosamine and acetate, the committed step in lipid A biosynthesis. In Burkholderia multivorans (strain ATCC 17616 / 249), this protein is UDP-3-O-acyl-N-acetylglucosamine deacetylase.